Reading from the N-terminus, the 319-residue chain is uncharacterized protein (319 aa).

The segment at 21 to 70 (ETETLKNSTDEVQTSSSFSSSGGRQSSPLTSGSKLEREKQTPSLEQGDTQ) is disordered. Residues 25 to 34 (LKNSTDEVQT) are compositionally biased toward polar residues. Over residues 35–51 (SSSFSSSGGRQSSPLTS) the composition is skewed to low complexity. Positions 61–70 (TPSLEQGDTQ) are enriched in polar residues.

This is an uncharacterized protein from Homo sapiens (Human).